Reading from the N-terminus, the 220-residue chain is StAR-related lipid transfer protein 6 (220 aa).

The region spanning 1–208 is the START domain; sequence MDFKAIAQQT…AKDGIKAHRT (208 aa).

May be involved in the intracellular transport of sterols or other lipids. May bind cholesterol or other sterols. This is StAR-related lipid transfer protein 6 (STARD6) from Homo sapiens (Human).